The chain runs to 196 residues: Heat shock protein beta-8 (196 aa).

Positions 1–28 (MADGQLPFPCSYPSRLRRDPFRDSPLSS) are disordered. Residues Ser-24 and Ser-57 each carry the phosphoserine modification. Thr-63 is subject to Phosphothreonine. Asymmetric dimethylarginine is present on residues Arg-71 and Arg-78. One can recognise a sHSP domain in the interval 78–185 (RFGVPAEGRS…PFGESSFNNE (108 aa)). Residue Ser-87 is modified to Phosphoserine. The tract at residues 176 to 196 (PFGESSFNNELPQDNQEVTCS) is disordered. The segment covering 178 to 196 (GESSFNNELPQDNQEVTCS) has biased composition (polar residues).

It belongs to the small heat shock protein (HSP20) family. In terms of assembly, monomer. Forms a ternary complex with BAG3 and HSPA1A. Component of the chaperone-assisted selective autophagy (CASA) complex consisting of BAG3, HSPA8/HSC70, HSPB8 and STUB1/CHIP. Interacts with HSPB1. Interacts with DNAJB6. Interacts with BAG3. As to expression, highly expressed in skeletal muscle, heart, uterus, liver, lung and ovary. Low levels found in stomach and brain. Not detected in small intestine, large intestine, kidney, spleen and testis. In the ovary, expression is concentrated in the endometrium and in the connective tissue between the circular and longitudinal muscles of the myometrium.

Its subcellular location is the cytoplasm. It localises to the nucleus. Its function is as follows. Involved in the chaperone-assisted selective autophagy (CASA), a crucial process for protein quality control, particularly in mechanical strained cells and tissues such as muscle. Displays temperature-dependent chaperone activity. This Mus musculus (Mouse) protein is Heat shock protein beta-8 (Hspb8).